A 288-amino-acid chain; its full sequence is Cyclin-dependent kinase 2 homolog (288 aa).

A Protein kinase domain is found at 4–284 (YHGLEKIGEG…AKEALQHAYF (281 aa)). Residues 10-18 (IGEGTYGVV) and Lys32 contribute to the ATP site. Phosphothreonine is present on Thr14. Tyr15 carries the post-translational modification Phosphotyrosine. Catalysis depends on Asp125, which acts as the Proton acceptor. Thr158 carries the phosphothreonine modification.

The protein belongs to the protein kinase superfamily. CMGC Ser/Thr protein kinase family. CDC2/CDKX subfamily. May form a complex composed of at least the catalytic subunit CRK2 and a cyclin. Mg(2+) serves as cofactor.

It localises to the cytoplasm. The catalysed reaction is L-seryl-[protein] + ATP = O-phospho-L-seryl-[protein] + ADP + H(+). It catalyses the reaction L-threonyl-[protein] + ATP = O-phospho-L-threonyl-[protein] + ADP + H(+). It carries out the reaction [DNA-directed RNA polymerase] + ATP = phospho-[DNA-directed RNA polymerase] + ADP + H(+). Phosphorylation at Thr-14 or Tyr-15 inactivates the enzyme, while phosphorylation at Thr-158 activates it. Its function is as follows. Serine/threonine-protein kinase. Involved in the control of the cell cycle. Required for entry into S-phase and mitosis. Probable component of the kinase complex that phosphorylates the repetitive C-terminus of RNA polymerase II. This chain is Cyclin-dependent kinase 2 homolog, found in Plasmodium knowlesi (strain H).